Here is a 464-residue protein sequence, read N- to C-terminus: Glutamate--tRNA ligase 1 (464 aa).

The 'HIGH' region signature appears at 10 to 20 (PSPTGYLHIGG). Residues 238–242 (KLSKR) carry the 'KMSKS' region motif. Residue lysine 241 coordinates ATP.

The protein belongs to the class-I aminoacyl-tRNA synthetase family. Glutamate--tRNA ligase type 1 subfamily. As to quaternary structure, monomer.

It is found in the cytoplasm. It catalyses the reaction tRNA(Glu) + L-glutamate + ATP = L-glutamyl-tRNA(Glu) + AMP + diphosphate. Its function is as follows. Catalyzes the attachment of glutamate to tRNA(Glu) in a two-step reaction: glutamate is first activated by ATP to form Glu-AMP and then transferred to the acceptor end of tRNA(Glu). The polypeptide is Glutamate--tRNA ligase 1 (Helicobacter hepaticus (strain ATCC 51449 / 3B1)).